A 766-amino-acid polypeptide reads, in one-letter code: Dipeptidyl peptidase 4 (766 aa).

Over 1–6 (MKTPWK) the chain is Cytoplasmic. Residues 7–28 (VLLGLLGAAALVTIITVPVVLL) traverse the membrane as a helical; Signal-anchor for type II membrane protein segment. Residues 29 to 766 (NKGTDDATAD…HFIKQCFSLP (738 aa)) lie on the Extracellular side of the membrane. Asn-85, Asn-92, Asn-150, Asn-219, Asn-229, Asn-281, and Asn-321 each carry an N-linked (GlcNAc...) asparagine glycan. 4 disulfide bridges follow: Cys-328/Cys-339, Cys-385/Cys-394, Cys-444/Cys-447, and Cys-454/Cys-472. Asn-520 carries an N-linked (GlcNAc...) asparagine glycan. Ser-630 serves as the catalytic Charge relay system. An intrachain disulfide couples Cys-649 to Cys-762. Asn-685 carries an N-linked (GlcNAc...) asparagine glycan. Catalysis depends on charge relay system residues Asp-708 and His-740.

The protein belongs to the peptidase S9B family. DPPIV subfamily. As to quaternary structure, monomer. Homodimer. Heterodimer with Seprase (FAP). Requires homodimerization for optimal dipeptidyl peptidase activity and T-cell costimulation. Found in a membrane raft complex, at least composed of BCL10, CARD11, DPP4 and IKBKB. Associates with collagen. Interacts with PTPRC; the interaction is enhanced in an interleukin-12-dependent manner in activated lymphocytes. Interacts (via extracellular domain) with ADA; does not inhibit its dipeptidyl peptidase activity. Interacts with CAV1 (via the N-terminus); the interaction is direct. Interacts (via cytoplasmic tail) with CARD11 (via PDZ domain); its homodimerization is necessary for interaction with CARD11. Interacts with IGF2R; the interaction is direct. Interacts with GPC3. Interacts with human coronavirus-EMC spike protein and acts as a receptor for this virus. (Microbial infection) Interacts with MERS coronavirus/MERS-CoV spike protein. In terms of processing, the soluble form (Dipeptidyl peptidase 4 soluble form also named SDPP) derives from the membrane form (Dipeptidyl peptidase 4 membrane form also named MDPP) by proteolytic processing. N- and O-Glycosylated. Post-translationally, phosphorylated. Mannose 6-phosphate residues in the carbohydrate moiety are necessary for interaction with IGF2R in activated T-cells. Mannose 6-phosphorylation is induced during T-cell activation. Expressed specifically in lymphatic vessels but not in blood vessels in the skin, small intestine, esophagus, ovary, breast and prostate glands. Not detected in lymphatic vessels in the lung, kidney, uterus, liver and stomach (at protein level). Expressed in the poorly differentiated crypt cells of the small intestine as well as in the mature villous cells. Expressed at very low levels in the colon.

It is found in the secreted. Its subcellular location is the cell membrane. The protein resides in the apical cell membrane. The protein localises to the cell projection. It localises to the invadopodium membrane. It is found in the lamellipodium membrane. Its subcellular location is the cell junction. The protein resides in the membrane raft. It carries out the reaction Release of an N-terminal dipeptide, Xaa-Yaa-|-Zaa-, from a polypeptide, preferentially when Yaa is Pro, provided Zaa is neither Pro nor hydroxyproline.. With respect to regulation, inhibited by GPC3 and diprotin A. Functionally, cell surface glycoprotein receptor involved in the costimulatory signal essential for T-cell receptor (TCR)-mediated T-cell activation. Acts as a positive regulator of T-cell coactivation, by binding at least ADA, CAV1, IGF2R, and PTPRC. Its binding to CAV1 and CARD11 induces T-cell proliferation and NF-kappa-B activation in a T-cell receptor/CD3-dependent manner. Its interaction with ADA also regulates lymphocyte-epithelial cell adhesion. In association with FAP is involved in the pericellular proteolysis of the extracellular matrix (ECM), the migration and invasion of endothelial cells into the ECM. May be involved in the promotion of lymphatic endothelial cells adhesion, migration and tube formation. When overexpressed, enhanced cell proliferation, a process inhibited by GPC3. Also acts as a serine exopeptidase with a dipeptidyl peptidase activity that regulates various physiological processes by cleaving peptides in the circulation, including many chemokines, mitogenic growth factors, neuropeptides and peptide hormones such as brain natriuretic peptide 32. Removes N-terminal dipeptides sequentially from polypeptides having unsubstituted N-termini provided that the penultimate residue is proline. In terms of biological role, (Microbial infection) Acts as a receptor for human coronavirus MERS-CoV-2. In Homo sapiens (Human), this protein is Dipeptidyl peptidase 4.